A 304-amino-acid chain; its full sequence is Acetyl-coenzyme A carboxylase carboxyl transferase subunit beta (304 aa).

The 270-residue stretch at 23 to 292 (VWTKCDSCGQ…PNPDAPREGV (270 aa)) folds into the CoA carboxyltransferase N-terminal domain. Zn(2+) is bound by residues Cys27, Cys30, Cys46, and Cys49. The C4-type zinc finger occupies 27-49 (CDSCGQVLYRAELERNLEVCPKC). Positions 284–304 (NPDAPREGVVVPPAPGQESEA) are disordered.

This sequence belongs to the AccD/PCCB family. In terms of assembly, acetyl-CoA carboxylase is a heterohexamer composed of biotin carboxyl carrier protein (AccB), biotin carboxylase (AccC) and two subunits each of ACCase subunit alpha (AccA) and ACCase subunit beta (AccD). Zn(2+) is required as a cofactor.

Its subcellular location is the cytoplasm. It carries out the reaction N(6)-carboxybiotinyl-L-lysyl-[protein] + acetyl-CoA = N(6)-biotinyl-L-lysyl-[protein] + malonyl-CoA. It participates in lipid metabolism; malonyl-CoA biosynthesis; malonyl-CoA from acetyl-CoA: step 1/1. Its function is as follows. Component of the acetyl coenzyme A carboxylase (ACC) complex. Biotin carboxylase (BC) catalyzes the carboxylation of biotin on its carrier protein (BCCP) and then the CO(2) group is transferred by the transcarboxylase to acetyl-CoA to form malonyl-CoA. This Salmonella arizonae (strain ATCC BAA-731 / CDC346-86 / RSK2980) protein is Acetyl-coenzyme A carboxylase carboxyl transferase subunit beta.